Here is a 724-residue protein sequence, read N- to C-terminus: Eukaryotic elongation factor 2 kinase (724 aa).

Ala-2 carries the post-translational modification N-acetylalanine. The interval 11–35 is disordered; sequence EGVDGGGSSGAGRHGDSDTDSDDDE. Residues 13-22 are compositionally biased toward gly residues; sequence VDGGGSSGAG. Phosphoserine occurs at positions 18, 27, 70, and 73. Position 77 is a phosphoserine; by autocatalysis and TRPM7 (Ser-77). The interval 80–93 is calmodulin-binding; it reads FKEAWKHAIEKAKH. The region spanning 115–325 is the Alpha-type protein kinase domain; it reads RYNAVTGEWL…ICQSMGLAPF (211 aa). Residue Ser-242 is modified to Phosphoserine. Position 295-301 (295-301) interacts with ATP; that stretch reads GDGNLGV. A Phosphothreonine modification is found at Thr-347. Thr-352 is subject to Phosphothreonine; by autocatalysis. Residues 353–476 are disordered; the sequence is EEKCGSPRIR…PESDEDSLGS (124 aa). A Phosphoserine; by MAPK13 and CDK1 modification is found at Ser-358. Over residues 364–376 the composition is skewed to low complexity; it reads LSGSRPPLLLRLS. Residues Ser-365 and Ser-391 each carry the phosphoserine modification. The segment covering 385 to 403 has biased composition (polar residues); sequence SDVTFDSLPSSPSSATPHS. Ser-397 is subject to Phosphoserine; by AMPK. Composition is skewed to basic and acidic residues over residues 421–435 and 444–468; these read GPRD…RDSE and SEKR…RRPE. Phosphoserine is present on residues Ser-434, Ser-444, Ser-469, Ser-473, and Ser-476. Ser-499 carries the phosphoserine; by PKA modification.

This sequence belongs to the protein kinase superfamily. Alpha-type protein kinase family. Monomer or homodimer. Interacts with Calmodulin/CALM1; this interaction is strictly required for phosphorylation activity. Post-translationally, the N-terminus is blocked. Autophosphorylated at multiple residues, Thr-347 being the major site. Phosphorylated by AMP-activated protein kinase AMPK at Ser-397 leading to EEF2K activation and protein synthesis inhibition. Phosphorylated by TRPM7 at Ser-77 resulting in improved protein stability, higher EE2F phosphorylated and subsequently reduced rate of protein synthesis. Phosphorylation by other kinases such as CDK1 and MAPK13 at Ser-358 or RPS6KA1 and RPS6KB1 at Ser-365 instead decrease EEF2K activity and promote protein synthesis. Widely expressed, with high levels in reticulocytes and skeletal muscle.

It catalyses the reaction [translation elongation factor 2] + ATP = [translation elongation factor 2]-phosphate + ADP + H(+). With respect to regulation, undergoes calcium/calmodulin-dependent intramolecular autophosphorylation, and this results in it becoming partially calcium/calmodulin-independent. Its function is as follows. Threonine kinase that regulates protein synthesis by controlling the rate of peptide chain elongation. Upon activation by a variety of upstream kinases including AMPK or TRPM7, phosphorylates the elongation factor EEF2 at a single site, renders it unable to bind ribosomes and thus inactive. In turn, the rate of protein synthesis is reduced. The protein is Eukaryotic elongation factor 2 kinase of Rattus norvegicus (Rat).